The primary structure comprises 464 residues: GTPase Der (464 aa).

2 EngA-type G domains span residues 3-166 (PTIA…AVES) and 177-350 (LKMA…QAAT). Residues 9–16 (GRPNVGKS), 56–60 (DTGGI), 118–121 (NKVD), 183–190 (GRPNVGKS), 230–234 (DTAGV), and 295–298 (NKWD) each bind GTP. The KH-like domain maps to 351-435 (EKYSTSFLTR…PVRIEYRSGD (85 aa)).

Belongs to the TRAFAC class TrmE-Era-EngA-EngB-Septin-like GTPase superfamily. EngA (Der) GTPase family. As to quaternary structure, associates with the 50S ribosomal subunit.

In terms of biological role, GTPase that plays an essential role in the late steps of ribosome biogenesis. The protein is GTPase Der of Teredinibacter turnerae (strain ATCC 39867 / T7901).